A 241-amino-acid chain; its full sequence is MKKIIFICFSLLLALTGGCSMNDNDKNSTNDNKTEAVKPKDMDPKDLPQVPAFQDEKTREYMVSTKEEEPGYYLLESKLKGFRMLFPEDGKYLSRRSSLTGKNKESIGFNSYDKDTNVMFDGHVTYYKEESFANEPKTMLDIVSGKNDYKGEYKKSSKKKTDIYTAKKKDIFDDIDRKYNYSYSYFGYVKSTEEDNLGVEYAFTLGCKNENQPCSLDEEKAKNKVEKLINSITFLIDKKEK.

The first 18 residues, 1–18 (MKKIIFICFSLLLALTGG), serve as a signal peptide directing secretion. Cys19 carries the N-palmitoyl cysteine lipid modification. A lipid anchor (S-diacylglycerol cysteine) is attached at Cys19. The interval 22 to 48 (NDNDKNSTNDNKTEAVKPKDMDPKDLP) is disordered. Residues 23-46 (DNDKNSTNDNKTEAVKPKDMDPKD) show a composition bias toward basic and acidic residues.

It is found in the cell membrane. In terms of biological role, required for complex colony architecture. This is Putative lipoprotein YvcA (yvcA) from Bacillus subtilis (strain 168).